The following is a 73-amino-acid chain: Translation initiation factor IF-1 1 (73 aa).

The S1-like domain occupies 1 to 72; it reads MAKEELIEFG…TKGRINFRHK (72 aa).

It belongs to the IF-1 family. In terms of assembly, component of the 30S ribosomal translation pre-initiation complex which assembles on the 30S ribosome in the order IF-2 and IF-3, IF-1 and N-formylmethionyl-tRNA(fMet); mRNA recruitment can occur at any time during PIC assembly.

The protein resides in the cytoplasm. Its function is as follows. One of the essential components for the initiation of protein synthesis. Stabilizes the binding of IF-2 and IF-3 on the 30S subunit to which N-formylmethionyl-tRNA(fMet) subsequently binds. Helps modulate mRNA selection, yielding the 30S pre-initiation complex (PIC). Upon addition of the 50S ribosomal subunit IF-1, IF-2 and IF-3 are released leaving the mature 70S translation initiation complex. This chain is Translation initiation factor IF-1 1, found in Cupriavidus pinatubonensis (strain JMP 134 / LMG 1197) (Cupriavidus necator (strain JMP 134)).